Reading from the N-terminus, the 117-residue chain is Immunoglobulin heavy variable 3-21 (117 aa).

Positions Met-1–Cys-19 are cleaved as a signal peptide. The framework-1 stretch occupies residues Glu-20–Ser-44. Residues Glu-20–Arg-117 form the Ig-like domain. Cys-41 and Cys-115 are disulfide-bonded. Positions Gly-45–Ser-52 are complementarity-determining-1. The segment at Met-53 to Ser-69 is framework-2. Residues Ile-70–Ile-77 are complementarity-determining-2. Residues Tyr-78–Cys-115 form a framework-3 region. Positions Ala-116–Arg-117 are complementarity-determining-3.

In terms of assembly, immunoglobulins are composed of two identical heavy chains and two identical light chains; disulfide-linked.

Its subcellular location is the secreted. The protein resides in the cell membrane. V region of the variable domain of immunoglobulin heavy chains that participates in the antigen recognition. Immunoglobulins, also known as antibodies, are membrane-bound or secreted glycoproteins produced by B lymphocytes. In the recognition phase of humoral immunity, the membrane-bound immunoglobulins serve as receptors which, upon binding of a specific antigen, trigger the clonal expansion and differentiation of B lymphocytes into immunoglobulins-secreting plasma cells. Secreted immunoglobulins mediate the effector phase of humoral immunity, which results in the elimination of bound antigens. The antigen binding site is formed by the variable domain of one heavy chain, together with that of its associated light chain. Thus, each immunoglobulin has two antigen binding sites with remarkable affinity for a particular antigen. The variable domains are assembled by a process called V-(D)-J rearrangement and can then be subjected to somatic hypermutations which, after exposure to antigen and selection, allow affinity maturation for a particular antigen. This is Immunoglobulin heavy variable 3-21 from Homo sapiens (Human).